Reading from the N-terminus, the 261-residue chain is Gap junction beta-6 protein (261 aa).

Over 1–22 the chain is Cytoplasmic; it reads MDWGTLHTVIGGVNKHSTSIGK. A helical transmembrane segment spans residues 23–45; it reads VWITVIFIFRVMILVVAAQEVWG. At 46–75 the chain is on the extracellular side; sequence DEQEDFVCNTLQPGCKNVCYDHFFPVSHIR. A helical membrane pass occupies residues 76-98; sequence LWALQLIFVSTPALLVAMHVAYY. The Cytoplasmic portion of the chain corresponds to 99–131; it reads RHETARKFIRGEKRNEFKDLEDIKRQKVRIEGS. A helical membrane pass occupies residues 132–154; sequence LWWTYTSSIFFRIIFEAAFMYVF. Residues 155–192 lie on the Extracellular side of the membrane; that stretch reads YFLYNGYHLPWVLKCGIDPCPNLVDCFISRPTEKTVFT. Residues 193 to 215 traverse the membrane as a helical segment; sequence VFMISASVICMLLNVAELCYLLL. At 216 to 261 the chain is on the cytoplasmic side; the sequence is KLCFRRSKRTQAQRNHPNHALKESKQNEMNELISDSGQNAITSFPS.

The protein belongs to the connexin family. Beta-type (group I) subfamily. As to quaternary structure, a connexon is composed of a hexamer of connexins. Interacts with CNST. In terms of tissue distribution, highly expressed in adult brain and skin. Less in uterus, lung and eye. Very low in testis and sciatic nerve. No expression before birth.

The protein resides in the cell membrane. It localises to the cell junction. It is found in the gap junction. Its function is as follows. One gap junction consists of a cluster of closely packed pairs of transmembrane channels, the connexons, through which materials of low MW diffuse from one cell to a neighboring cell. The sequence is that of Gap junction beta-6 protein (Gjb6) from Mus musculus (Mouse).